The sequence spans 218 residues: Lactosylceramide 4-alpha-galactosyltransferase (218 aa).

Positions 57-59 (DTD) match the DXD motif motif.

The protein belongs to the glycosyltransferase 32 family.

The protein resides in the golgi apparatus membrane. It catalyses the reaction a beta-D-Gal-(1-&gt;4)-beta-D-Glc-(1&lt;-&gt;1)-Cer(d18:1(4E)) + UDP-alpha-D-galactose = a globoside Gb3Cer (d18:1(4E)) + UDP + H(+). The catalysed reaction is a beta-D-Gal-(1&lt;-&gt;1')-ceramide + UDP-alpha-D-galactose = alpha-D-Gal-(1-&gt;4)-beta-D-Gal-(1&lt;-&gt;1')-Cer + UDP + H(+). It functions in the pathway glycolipid biosynthesis. Catalyzes the transfer of galactose from UDP-alpha-D-galactose to lactosylceramide/beta-D-galactosyl-(1-&gt;4)-beta-D-glucosyl-(1&lt;-&gt;1)-ceramide(d18:1(4E)) to produce globotriaosylceramide/globoside Gb3Cer (d18:1(4E)). Also able to transfer galactose to galactosylceramide/beta-D-Gal-(1&lt;-&gt;1')-Cer. Globoside Gb3Cer is a glycosphingolipid of the globo serie, one of the major types of neutral root structures of glycosphingolipids, that constitute a significant portion of mammalian cell membranes. The chain is Lactosylceramide 4-alpha-galactosyltransferase (A4GALT) from Pongo pygmaeus (Bornean orangutan).